Reading from the N-terminus, the 132-residue chain is Small ribosomal subunit protein uS8 (132 aa).

It belongs to the universal ribosomal protein uS8 family. As to quaternary structure, part of the 30S ribosomal subunit. Contacts proteins S5 and S12.

Functionally, one of the primary rRNA binding proteins, it binds directly to 16S rRNA central domain where it helps coordinate assembly of the platform of the 30S subunit. The chain is Small ribosomal subunit protein uS8 from Maricaulis maris (strain MCS10) (Caulobacter maris).